A 370-amino-acid polypeptide reads, in one-letter code: Putative replication factor C small subunit L478 (370 aa).

G41 to K48 lines the ATP pocket. Residues R342–K353 show a composition bias toward basic and acidic residues. The disordered stretch occupies residues R342 to N370. Positions S354–N370 are enriched in basic residues.

The protein belongs to the activator 1 small subunits family. RfcS subfamily.

Its function is as follows. Part of the RFC clamp loader complex which loads the PCNA sliding clamp onto DNA. The polypeptide is Putative replication factor C small subunit L478 (Acanthamoeba polyphaga (Amoeba)).